The primary structure comprises 239 residues: Sugar fermentation stimulation protein homolog (239 aa).

It belongs to the SfsA family.

The protein is Sugar fermentation stimulation protein homolog of Cyanothece sp. (strain PCC 7425 / ATCC 29141).